The primary structure comprises 281 residues: MAVSYNALAQSLARSSCFIPKPYSFRDTKLRSRSNVVFACNDNKNIALQAKVDNLLDRIKWDDKGLAVAIAQNVDTGAVLMQGFVNREALSTTISSRKATFFSRSRSTLWTKGETSNNFINILDVYVDCDRDSIIYLGTPDGPTCHTGEETCYYTSVFDQLNNDEASGNKLALTTLYSLESIISKRKEESTVPQEGKPSWTRRLLTDDALLCSKIREEADELCRTLEDNEEVSRTPSEMADVLYHAMVLLSKRGVKMEDVLEVLRKRFSQSGIEEKQNRTK.

The N-terminal 50 residues, methionine 1–alanine 50, are a transit peptide targeting the chloroplast. Residues lysine 51–serine 178 are phosphoribosyl-AMP cyclohydrolase. Positions leucine 179–lysine 281 are phosphoribosyl-ATP pyrophosphohydrolase.

In the N-terminal section; belongs to the PRA-CH family. The protein in the C-terminal section; belongs to the PRA-PH family. Ubiquitously expressed throughout development.

It localises to the plastid. The protein resides in the chloroplast. The catalysed reaction is 1-(5-phospho-beta-D-ribosyl)-ATP + H2O = 1-(5-phospho-beta-D-ribosyl)-5'-AMP + diphosphate + H(+). It catalyses the reaction 1-(5-phospho-beta-D-ribosyl)-5'-AMP + H2O = 1-(5-phospho-beta-D-ribosyl)-5-[(5-phospho-beta-D-ribosylamino)methylideneamino]imidazole-4-carboxamide. It participates in amino-acid biosynthesis; L-histidine biosynthesis; L-histidine from 5-phospho-alpha-D-ribose 1-diphosphate: step 2/9. Its pathway is amino-acid biosynthesis; L-histidine biosynthesis; L-histidine from 5-phospho-alpha-D-ribose 1-diphosphate: step 3/9. The polypeptide is Histidine biosynthesis bifunctional protein hisIE, chloroplastic (HISN2) (Arabidopsis thaliana (Mouse-ear cress)).